The primary structure comprises 239 residues: Outer membrane protein PagN (239 aa).

The signal sequence occupies residues Met-1–Ala-22. Residues Lys-23–Ile-26 are Periplasmic-facing. The beta stranded transmembrane segment at Tyr-27 to Val-36 threads the bilayer. Topologically, residues Val-37–Val-65 are extracellular. The beta stranded transmembrane segment at Phe-66–Phe-76 threads the bilayer. Topologically, residues Tyr-77–Gln-81 are periplasmic. The chain crosses the membrane as a beta stranded span at residues Leu-82–Phe-92. The Extracellular segment spans residues Arg-93 to Arg-120. A beta stranded membrane pass occupies residues Met-121–Phe-132. Topologically, residues His-133 to Ala-137 are periplasmic. A beta stranded transmembrane segment spans residues Phe-138 to Leu-148. Residues Ala-149–Asn-174 are Extracellular-facing. Residues Phe-175–Tyr-185 traverse the membrane as a beta stranded segment. At Ala-186–Asn-190 the chain is on the periplasmic side. A beta stranded membrane pass occupies residues Ile-191–Ile-200. Over Asn-201–Asp-230 the chain is Extracellular. The beta stranded transmembrane segment at Phe-231–Phe-239 threads the bilayer.

The protein localises to the cell outer membrane. Functionally, haemagglutinin that facilitates the adhesion to and invasion of epithelial mammalian cells. Utilizes heparinated proteoglycan as a receptor to successfully invade host cells. The chain is Outer membrane protein PagN (pagN) from Salmonella typhimurium (strain LT2 / SGSC1412 / ATCC 700720).